A 153-amino-acid polypeptide reads, in one-letter code: 6,7-dimethyl-8-ribityllumazine synthase (153 aa).

Residues phenylalanine 22, 56 to 58 (AFE), and 80 to 82 (AVI) each bind 5-amino-6-(D-ribitylamino)uracil. 85–86 (ST) serves as a coordination point for (2S)-2-hydroxy-3-oxobutyl phosphate. The active-site Proton donor is histidine 88. Phenylalanine 113 lines the 5-amino-6-(D-ribitylamino)uracil pocket. Arginine 127 is a binding site for (2S)-2-hydroxy-3-oxobutyl phosphate.

It belongs to the DMRL synthase family.

It carries out the reaction (2S)-2-hydroxy-3-oxobutyl phosphate + 5-amino-6-(D-ribitylamino)uracil = 6,7-dimethyl-8-(1-D-ribityl)lumazine + phosphate + 2 H2O + H(+). It participates in cofactor biosynthesis; riboflavin biosynthesis; riboflavin from 2-hydroxy-3-oxobutyl phosphate and 5-amino-6-(D-ribitylamino)uracil: step 1/2. Functionally, catalyzes the formation of 6,7-dimethyl-8-ribityllumazine by condensation of 5-amino-6-(D-ribitylamino)uracil with 3,4-dihydroxy-2-butanone 4-phosphate. This is the penultimate step in the biosynthesis of riboflavin. The polypeptide is 6,7-dimethyl-8-ribityllumazine synthase (Clostridium botulinum (strain Eklund 17B / Type B)).